The chain runs to 130 residues: uncharacterized protein (130 aa).

The next 2 helical transmembrane spans lie at 35-57 (FLITLLSALFVIFILLLVSFISL) and 72-91 (IVFFAISAGAFFLILILLLL).

It is found in the cell membrane. This is an uncharacterized protein from Pasteurella multocida (strain Pm70).